The following is an 87-amino-acid chain: Small ribosomal subunit protein bS18 (87 aa).

The segment covering 1 to 19 (MSTRSRARKRSRVRSRTRR) has biased composition (basic residues). Residues 1–25 (MSTRSRARKRSRVRSRTRRKDPIFV) are disordered.

This sequence belongs to the bacterial ribosomal protein bS18 family. As to quaternary structure, part of the 30S ribosomal subunit. Forms a tight heterodimer with protein bS6.

Functionally, binds as a heterodimer with protein bS6 to the central domain of the 16S rRNA, where it helps stabilize the platform of the 30S subunit. This chain is Small ribosomal subunit protein bS18, found in Rhodopirellula baltica (strain DSM 10527 / NCIMB 13988 / SH1).